A 118-amino-acid polypeptide reads, in one-letter code: Ribonuclease P protein component (118 aa).

It belongs to the RnpA family. As to quaternary structure, consists of a catalytic RNA component (M1 or rnpB) and a protein subunit.

It catalyses the reaction Endonucleolytic cleavage of RNA, removing 5'-extranucleotides from tRNA precursor.. Functionally, RNaseP catalyzes the removal of the 5'-leader sequence from pre-tRNA to produce the mature 5'-terminus. It can also cleave other RNA substrates such as 4.5S RNA. The protein component plays an auxiliary but essential role in vivo by binding to the 5'-leader sequence and broadening the substrate specificity of the ribozyme. The polypeptide is Ribonuclease P protein component (Rickettsia felis (strain ATCC VR-1525 / URRWXCal2) (Rickettsia azadi)).